The primary structure comprises 599 residues: Elongation factor 4 (599 aa).

One can recognise a tr-type G domain in the interval 2-184 (KHIRNFSIIA…RLVRDIPPPQ (183 aa)). Residues 14 to 19 (DHGKST) and 131 to 134 (NKID) each bind GTP.

It belongs to the TRAFAC class translation factor GTPase superfamily. Classic translation factor GTPase family. LepA subfamily.

It localises to the cell inner membrane. It catalyses the reaction GTP + H2O = GDP + phosphate + H(+). Its function is as follows. Required for accurate and efficient protein synthesis under certain stress conditions. May act as a fidelity factor of the translation reaction, by catalyzing a one-codon backward translocation of tRNAs on improperly translocated ribosomes. Back-translocation proceeds from a post-translocation (POST) complex to a pre-translocation (PRE) complex, thus giving elongation factor G a second chance to translocate the tRNAs correctly. Binds to ribosomes in a GTP-dependent manner. In Yersinia enterocolitica serotype O:8 / biotype 1B (strain NCTC 13174 / 8081), this protein is Elongation factor 4.